We begin with the raw amino-acid sequence, 881 residues long: Probable inorganic carbon transporter subunit DabA (881 aa).

Zn(2+) contacts are provided by cysteine 399, aspartate 401, histidine 585, and cysteine 600.

It belongs to the inorganic carbon transporter (TC 9.A.2) DabA family. As to quaternary structure, forms a complex with DabB. Requires Zn(2+) as cofactor.

The protein resides in the cell membrane. Part of an energy-coupled inorganic carbon pump. The chain is Probable inorganic carbon transporter subunit DabA from Geobacillus sp. (strain WCH70).